The following is a 319-amino-acid chain: Forkhead box protein E3 (319 aa).

The interval methionine 1–arginine 69 is disordered. Positions alanine 44 to proline 53 are enriched in low complexity. Residues lysine 71 to lysine 165 constitute a DNA-binding region (fork-head).

Its subcellular location is the nucleus. Transcription factor that controls lens epithelial cell growth through regulation of proliferation, apoptosis and cell cycle. During lens development, controls the ratio of the lens fiber cells to the cells of the anterior lens epithelium by regulating the rate of proliferation and differentiation. Controls lens vesicle closure and subsequent separation of the lens vesicle from ectoderm. Controls the expression of DNAJB1 in a pathway that is crucial for the development of the anterior segment of the eye. In Homo sapiens (Human), this protein is Forkhead box protein E3 (FOXE3).